Consider the following 237-residue polypeptide: Ribonuclease PH (237 aa).

Residues arginine 86 and 124 to 126 (GTR) each bind phosphate.

The protein belongs to the RNase PH family. As to quaternary structure, homohexameric ring arranged as a trimer of dimers.

It carries out the reaction tRNA(n+1) + phosphate = tRNA(n) + a ribonucleoside 5'-diphosphate. Its function is as follows. Phosphorolytic 3'-5' exoribonuclease that plays an important role in tRNA 3'-end maturation. Removes nucleotide residues following the 3'-CCA terminus of tRNAs; can also add nucleotides to the ends of RNA molecules by using nucleoside diphosphates as substrates, but this may not be physiologically important. Probably plays a role in initiation of 16S rRNA degradation (leading to ribosome degradation) during starvation. This chain is Ribonuclease PH, found in Shewanella loihica (strain ATCC BAA-1088 / PV-4).